An 86-amino-acid polypeptide reads, in one-letter code: Putative membrane protein insertion efficiency factor (86 aa).

Positions 64-86 are disordered; sequence GVDPVPKKSSSKTSTTACGCGHS. Positions 70 to 79 are enriched in low complexity; sequence KKSSSKTSTT.

It belongs to the UPF0161 family.

It localises to the cell inner membrane. Its function is as follows. Could be involved in insertion of integral membrane proteins into the membrane. The polypeptide is Putative membrane protein insertion efficiency factor (Janthinobacterium sp. (strain Marseille) (Minibacterium massiliensis)).